A 304-amino-acid chain; its full sequence is Quinolinate synthase (304 aa).

Iminosuccinate is bound by residues H23 and S40. C86 serves as a coordination point for [4Fe-4S] cluster. Iminosuccinate is bound by residues 112-114 and S129; that span reads YVN. C173 contributes to the [4Fe-4S] cluster binding site. Residues 199-201 and T216 each bind iminosuccinate; that span reads HPE. C260 contacts [4Fe-4S] cluster.

Belongs to the quinolinate synthase family. Type 2 subfamily. Requires [4Fe-4S] cluster as cofactor.

Its subcellular location is the cytoplasm. It catalyses the reaction iminosuccinate + dihydroxyacetone phosphate = quinolinate + phosphate + 2 H2O + H(+). Its pathway is cofactor biosynthesis; NAD(+) biosynthesis; quinolinate from iminoaspartate: step 1/1. Its function is as follows. Catalyzes the condensation of iminoaspartate with dihydroxyacetone phosphate to form quinolinate. The sequence is that of Quinolinate synthase from Methanothermobacter thermautotrophicus (strain ATCC 29096 / DSM 1053 / JCM 10044 / NBRC 100330 / Delta H) (Methanobacterium thermoautotrophicum).